The sequence spans 102 residues: Small ribosomal subunit protein uS10 (102 aa).

This sequence belongs to the universal ribosomal protein uS10 family. As to quaternary structure, part of the 30S ribosomal subunit.

Functionally, involved in the binding of tRNA to the ribosomes. In Pediococcus pentosaceus (strain ATCC 25745 / CCUG 21536 / LMG 10740 / 183-1w), this protein is Small ribosomal subunit protein uS10.